A 496-amino-acid chain; its full sequence is RNA-binding motif protein, Y chromosome, family 1 member D (496 aa).

An RRM domain is found at 8-85 (GKLFIGGLNR…KAIKVEQAKK (78 aa)). 2 disordered regions span residues 67-349 (DMNG…HRDY) and 452-496 (KDQR…SSRY). Composition is skewed to low complexity over residues 97-114 (PASS…SARG) and 149-159 (PVKRGPSSRSG). Residues 175–184 (NSWMGSQGPM) are compositionally biased toward polar residues. Composition is skewed to basic and acidic residues over residues 204-214 (RNDRMSTRHDG), 242-253 (DNGHSNRDEHSS), 276-289 (AYRD…DESY), 313-326 (GYRD…HESY), 335-349 (SSRE…HRDY), and 484-496 (GESR…SSRY).

Interacts with splicing factor proteins SFRS3/SRP20, TRA2B/SFRS10, KHDRBS1/SAM68 and KHDRBS3. In terms of tissue distribution, testis-specific.

Its subcellular location is the nucleus. In terms of biological role, RNA-binding protein which may be involved in spermatogenesis. Required for sperm development, possibly by participating in pre-mRNA splicing in the testis. This Homo sapiens (Human) protein is RNA-binding motif protein, Y chromosome, family 1 member D (RBMY1D).